Reading from the N-terminus, the 207-residue chain is Vexin (207 aa).

The disordered stretch occupies residues 65-104; it reads RDTGDRRWLQTGRLQTARPPGAHPTKTPSRPVGISEPKTS.

Belongs to the vexin family.

The protein localises to the cell membrane. It localises to the nucleus. In terms of biological role, required for neurogenesis in the neural plate and retina. Strongly cooperates with neural bHLH factors to promote neurogenesis. The protein is Vexin of Mus musculus (Mouse).